Consider the following 545-residue polypeptide: Glucans biosynthesis protein G (545 aa).

An N-terminal signal peptide occupies residues 1 to 34; that stretch reads MVSLLRCQSFKPSSSLICSLALSAAFALSSSAFA. Positions 38–60 are disordered; that stretch reads KPAENKPATPVVSPPKATAQPAN.

Belongs to the OpgD/OpgG family.

The protein resides in the periplasm. Its pathway is glycan metabolism; osmoregulated periplasmic glucan (OPG) biosynthesis. Functionally, involved in the biosynthesis of osmoregulated periplasmic glucans (OPGs). This Shewanella sp. (strain MR-7) protein is Glucans biosynthesis protein G.